The chain runs to 105 residues: uncharacterized protein (105 aa).

2 helical membrane passes run 7–26 and 30–52; these read VLSV…WLSL and VDMT…LISI.

The protein localises to the cell membrane. This is an uncharacterized protein from Archaeoglobus fulgidus (strain ATCC 49558 / DSM 4304 / JCM 9628 / NBRC 100126 / VC-16).